The primary structure comprises 265 residues: ATP synthase subunit a (265 aa).

The next 6 membrane-spanning stretches (helical) occupy residues 26–46, 88–108, 132–152, 168–188, 195–217, and 231–251; these read VHLD…FFFY, IGSL…IDLI, DISA…FYTI, PFNH…TLLA, FRLF…MYMA, and LIWA…FMML.

This sequence belongs to the ATPase A chain family. F-type ATPases have 2 components, CF(1) - the catalytic core - and CF(0) - the membrane proton channel. CF(1) has five subunits: alpha(3), beta(3), gamma(1), delta(1), epsilon(1). CF(0) has three main subunits: a(1), b(2) and c(9-12). The alpha and beta chains form an alternating ring which encloses part of the gamma chain. CF(1) is attached to CF(0) by a central stalk formed by the gamma and epsilon chains, while a peripheral stalk is formed by the delta and b chains.

It localises to the cell inner membrane. Functionally, key component of the proton channel; it plays a direct role in the translocation of protons across the membrane. This is ATP synthase subunit a from Histophilus somni (strain 129Pt) (Haemophilus somnus).